A 180-amino-acid chain; its full sequence is MKQLLDFLPLVVFFIFYKMYDIFVASGALIVATLVALAFTWLKYRKVEKMTLVTAAMVLVFGTLTLAFHSDLFIKWKVTVLYVLFALALLVSQWVMKKPLIQRMLGKELTLPDKVWSTLNLSWAIFFLVCGLLNIYVAFWLPQDIWVNFKVFGLTALTLIFTLISGVYIYRHMPEEQKKS.

5 helical membrane passes run 22–42 (IFVA…FTWL), 50–70 (MTLV…AFHS), 72–92 (LFIK…LLVS), 121–141 (LSWA…AFWL), and 149–169 (FKVF…GVYI).

Belongs to the YciB family.

Its subcellular location is the cell inner membrane. In terms of biological role, plays a role in cell envelope biogenesis, maintenance of cell envelope integrity and membrane homeostasis. This is Inner membrane-spanning protein YciB from Yersinia pseudotuberculosis serotype O:1b (strain IP 31758).